We begin with the raw amino-acid sequence, 144 residues long: Transcriptional regulator SlyA (144 aa).

Positions 2 to 135 (ESPLGSDLAR…LLHLIRKLEQ (134 aa)) constitute an HTH marR-type domain. Positions 49–72 (QIQLAKAIGIEQPSLVRTLDQLEE) form a DNA-binding region, H-T-H motif.

Belongs to the SlyA family. In terms of assembly, homodimer.

In terms of biological role, transcription regulator that can specifically activate or repress expression of target genes. In Klebsiella pneumoniae (strain 342), this protein is Transcriptional regulator SlyA.